A 76-amino-acid chain; its full sequence is Bacteriocin uberolysin (76 aa).

The propeptide occupies 1–6; that stretch reads MDILLE. The segment at residues 7 to 76 is a cross-link (cyclopeptide (Leu-Trp)); the sequence is LAGYTGIASG…RNLKAQAVIW (70 aa).

Belongs to the bacteriocin class V family.

Its subcellular location is the secreted. Its function is as follows. Cyclopeptide antibiotic with bacteriolytic activity against most streptococci (except S.rattus and S.mutans), Listeria spp., enterococci and staphylococci. The polypeptide is Bacteriocin uberolysin (ublA) (Streptococcus uberis).